Reading from the N-terminus, the 308-residue chain is MITTVVGSYPTEPRGPETLGERLLNFFGSYDRYRPAIEAAVRDQFRAGVDIISDGQVRGDMVGHFAAAIGGMKIEDGTSIIYSRITPPAGSIGAADLRYAYRILRGLTDDESRGVKGIITGPSTMIYASRIEGFYDPQKRDRAVMDMAGVLKIEAKHLQDAGAAMIQIDEPFLSTGIVDMKTAGRAIDHIAAGLDIEVSLHVCGDIRNVLSDLLRFKVDVLDLEFAGRPSNLEVLEEKWRGDKGVGFGCVDTTTERVESMEEIRNLIKRGADIVGEENLYIDPDCGMRKLPRKAAFSKLRNMVMAAGN.

Residues histidine 201, cysteine 203, glutamate 224, and cysteine 285 each coordinate Zn(2+).

This sequence belongs to the archaeal MetE family. Zn(2+) is required as a cofactor.

Its pathway is amino-acid biosynthesis; L-methionine biosynthesis via de novo pathway. Functionally, catalyzes the transfer of a methyl group to L-homocysteine resulting in methionine formation. Can use methylcobalamin and methylcobinamide as methyl donors, but methylcobalamin is not considered to be the physiological substrate. The protein is Methionine synthase of Methanothermobacter thermautotrophicus (strain ATCC 29096 / DSM 1053 / JCM 10044 / NBRC 100330 / Delta H) (Methanobacterium thermoautotrophicum).